The chain runs to 340 residues: DNA-directed RNA polymerase subunit alpha (340 aa).

Positions 1–233 (MIRDEISVST…DLFIPFLRAE (233 aa)) are alpha N-terminal domain (alpha-NTD). The tract at residues 268 to 340 (AFKHIFIDQS…DLPKNKFQIH (73 aa)) is alpha C-terminal domain (alpha-CTD).

Belongs to the RNA polymerase alpha chain family. In plastids the minimal PEP RNA polymerase catalytic core is composed of four subunits: alpha, beta, beta', and beta''. When a (nuclear-encoded) sigma factor is associated with the core the holoenzyme is formed, which can initiate transcription.

The protein localises to the plastid. Its subcellular location is the chloroplast. The catalysed reaction is RNA(n) + a ribonucleoside 5'-triphosphate = RNA(n+1) + diphosphate. DNA-dependent RNA polymerase catalyzes the transcription of DNA into RNA using the four ribonucleoside triphosphates as substrates. The chain is DNA-directed RNA polymerase subunit alpha from Cycas taitungensis (Prince sago).